A 399-amino-acid chain; its full sequence is Elongation factor Tu (399 aa).

The region spanning 10 to 204 (KPHVNIGTIG…AVDASIPEPE (195 aa)) is the tr-type G domain. Residues 19–26 (GHVDHGKT) form a G1 region. Residue 19–26 (GHVDHGKT) participates in GTP binding. Position 26 (Thr26) interacts with Mg(2+). A G2 region spans residues 60–64 (GITIN). The segment at 81–84 (DCPG) is G3. Residues 81–85 (DCPGH) and 136–139 (NKCD) contribute to the GTP site. The segment at 136 to 139 (NKCD) is G4. Residues 174 to 176 (SGL) are G5.

The protein belongs to the TRAFAC class translation factor GTPase superfamily. Classic translation factor GTPase family. EF-Tu/EF-1A subfamily. As to quaternary structure, monomer.

The protein resides in the cytoplasm. The enzyme catalyses GTP + H2O = GDP + phosphate + H(+). Its function is as follows. GTP hydrolase that promotes the GTP-dependent binding of aminoacyl-tRNA to the A-site of ribosomes during protein biosynthesis. The polypeptide is Elongation factor Tu (Synechococcus sp. (strain CC9902)).